Reading from the N-terminus, the 136-residue chain is Cytochrome c-550 (136 aa).

Positions 1-28 (MTKLTFGALVALAMTAAASTAMSSKAMA) are cleaved as a signal peptide. Heme c contacts are provided by Cys-41, Cys-44, His-45, and Met-107.

In terms of processing, binds 1 heme c group covalently per subunit. Post-translationally, the N-terminus is blocked.

The protein resides in the periplasm. Its function is as follows. Plays a role in bacteroid respiration under conditions of oxygen limitation. Required for electron-transfer during denitrification. The sequence is that of Cytochrome c-550 (cycA) from Bradyrhizobium diazoefficiens (strain JCM 10833 / BCRC 13528 / IAM 13628 / NBRC 14792 / USDA 110).